Here is a 231-residue protein sequence, read N- to C-terminus: Secreted LysM effector LysM13 (231 aa).

The N-terminal stretch at 1-19 (MVFLSLKYALSGLAATAAA) is a signal peptide. Residues Asn-30, Asn-34, Asn-77, Asn-100, Asn-130, Asn-201, and Asn-226 are each glycosylated (N-linked (GlcNAc...) asparagine). A LysM domain is found at 38 to 82 (TTYTTTSEDTIFTVARKFDRGPCDIARYNRMIDAEHIFANFTLRI).

It belongs to the secreted LysM effector family.

It is found in the secreted. Its function is as follows. Secreted LysM effector that might have a role in sequestration of chitin oligosaccharides (breakdown products of fungal cell walls that are released during invasion and act as triggers of host immunity) to dampen host defense. This chain is Secreted LysM effector LysM13, found in Penicillium expansum (Blue mold rot fungus).